We begin with the raw amino-acid sequence, 116 residues long: Large ribosomal subunit protein bL19 (116 aa).

It belongs to the bacterial ribosomal protein bL19 family.

Functionally, this protein is located at the 30S-50S ribosomal subunit interface and may play a role in the structure and function of the aminoacyl-tRNA binding site. The sequence is that of Large ribosomal subunit protein bL19 (rplS) from Geobacillus stearothermophilus (Bacillus stearothermophilus).